The primary structure comprises 71 residues: Defensin-like protein 292 (71 aa).

Cystine bridges form between Cys44/Cys64, Cys50/Cys69, and Cys56/Cys71.

The protein belongs to the DEFL family.

This chain is Defensin-like protein 292, found in Arabidopsis thaliana (Mouse-ear cress).